A 282-amino-acid chain; its full sequence is Phosphatidylglycerol--prolipoprotein diacylglyceryl transferase (282 aa).

A run of 3 helical transmembrane segments spans residues 18-38 (LSIK…YFIA), 55-75 (VIFY…VIFQ), and 89-109 (IWHG…TGII). A 1,2-diacyl-sn-glycero-3-phospho-(1'-sn-glycerol) is bound at residue arginine 137. Transmembrane regions (helical) follow at residues 203–223 (VGET…FVEG) and 235–255 (IRVA…ILIY).

The protein belongs to the Lgt family.

Its subcellular location is the cell membrane. It catalyses the reaction L-cysteinyl-[prolipoprotein] + a 1,2-diacyl-sn-glycero-3-phospho-(1'-sn-glycerol) = an S-1,2-diacyl-sn-glyceryl-L-cysteinyl-[prolipoprotein] + sn-glycerol 1-phosphate + H(+). It functions in the pathway protein modification; lipoprotein biosynthesis (diacylglyceryl transfer). Functionally, catalyzes the transfer of the diacylglyceryl group from phosphatidylglycerol to the sulfhydryl group of the N-terminal cysteine of a prolipoprotein, the first step in the formation of mature lipoproteins. The sequence is that of Phosphatidylglycerol--prolipoprotein diacylglyceryl transferase from Staphylococcus haemolyticus (strain JCSC1435).